A 409-amino-acid chain; its full sequence is Protein naked cuticle homolog 2-like (409 aa).

Gly2 carries the N-myristoyl glycine lipid modification. Residues 109–144 (AEDNRQEWVFTLYDFDNSGKVTKEDMSSLMHTIYDV) enclose the EF-hand domain. Residues Asp122, Asp124, Ser126, Lys128, and Asp133 each contribute to the Ca(2+) site. Disordered stretches follow at residues 166–224 (VTPE…YCVD), 243–315 (TSRF…RFPG), 346–367 (NHTH…IRSR), and 388–409 (RHEH…YHQT). 2 stretches are compositionally biased toward basic and acidic residues: residues 171–185 (AARR…RETS) and 193–224 (VRSE…YCVD). Residues 247–268 (DSSSPDADQDPPSRSSHSQSRP) show a composition bias toward low complexity. Positions 389 to 409 (HEHHHHHEHHHHHHYHHYHQT) are enriched in basic residues.

This sequence belongs to the NKD family.

The protein localises to the cell membrane. It localises to the cytoplasm. Functionally, cell autonomous antagonist of both the canonical and non-canonical Wnt signaling pathways. The sequence is that of Protein naked cuticle homolog 2-like (nkd2l) from Danio rerio (Zebrafish).